A 334-amino-acid polypeptide reads, in one-letter code: Holliday junction branch migration complex subunit RuvB (334 aa).

The tract at residues 1 to 182 is large ATPase domain (RuvB-L); it reads MDERLVSTEA…FGVHARLEYY (182 aa). Residues leucine 21, arginine 22, glycine 63, lysine 66, threonine 67, threonine 68, 129–131, arginine 172, tyrosine 182, and arginine 219 contribute to the ATP site; that span reads EDF. Threonine 67 is a Mg(2+) binding site. The small ATPAse domain (RuvB-S) stretch occupies residues 183 to 253; sequence EQRDLAHIVS…IAEDALERLQ (71 aa). The head domain (RuvB-H) stretch occupies residues 256–334; sequence KLGLDHIDHK…HFQMEVPIRD (79 aa). Arginine 311 and arginine 316 together coordinate DNA.

The protein belongs to the RuvB family. Homohexamer. Forms an RuvA(8)-RuvB(12)-Holliday junction (HJ) complex. HJ DNA is sandwiched between 2 RuvA tetramers; dsDNA enters through RuvA and exits via RuvB. An RuvB hexamer assembles on each DNA strand where it exits the tetramer. Each RuvB hexamer is contacted by two RuvA subunits (via domain III) on 2 adjacent RuvB subunits; this complex drives branch migration. In the full resolvosome a probable DNA-RuvA(4)-RuvB(12)-RuvC(2) complex forms which resolves the HJ.

It is found in the cytoplasm. The enzyme catalyses ATP + H2O = ADP + phosphate + H(+). In terms of biological role, the RuvA-RuvB-RuvC complex processes Holliday junction (HJ) DNA during genetic recombination and DNA repair, while the RuvA-RuvB complex plays an important role in the rescue of blocked DNA replication forks via replication fork reversal (RFR). RuvA specifically binds to HJ cruciform DNA, conferring on it an open structure. The RuvB hexamer acts as an ATP-dependent pump, pulling dsDNA into and through the RuvAB complex. RuvB forms 2 homohexamers on either side of HJ DNA bound by 1 or 2 RuvA tetramers; 4 subunits per hexamer contact DNA at a time. Coordinated motions by a converter formed by DNA-disengaged RuvB subunits stimulates ATP hydrolysis and nucleotide exchange. Immobilization of the converter enables RuvB to convert the ATP-contained energy into a lever motion, pulling 2 nucleotides of DNA out of the RuvA tetramer per ATP hydrolyzed, thus driving DNA branch migration. The RuvB motors rotate together with the DNA substrate, which together with the progressing nucleotide cycle form the mechanistic basis for DNA recombination by continuous HJ branch migration. Branch migration allows RuvC to scan DNA until it finds its consensus sequence, where it cleaves and resolves cruciform DNA. The polypeptide is Holliday junction branch migration complex subunit RuvB (Bacillus pumilus (strain SAFR-032)).